The chain runs to 393 residues: uncharacterized protein (393 aa).

Over 1-17 (MVSKDQTSFNKRWTLGL) the chain is Cytoplasmic. The helical transmembrane segment at 18-38 (LMLGLVIILWVLSSFLINLIF) threads the bilayer. Topologically, residues 39–46 (EDDSYRKP) are vacuolar. Residues 47-67 (FFITYTNTAAFIFYLFPTAKA) traverse the membrane as a helical segment. Topologically, residues 68-132 (VVVNYKDTGR…LYETIKLSAE (65 aa)) are cytoplasmic. Ser-93 carries the phosphoserine modification. The chain crosses the membrane as a helical span at residues 133–153 (FCILWFTANLVTNASLAFTSV). Residues 154–156 (ASQ) are Vacuolar-facing. Residues 157–176 (TILSTTSSFFTLFIGAICHV) form a helical membrane-spanning segment. At 177–182 (ESLSKS) the chain is on the cytoplasmic side. The helical transmembrane segment at 183-200 (KVLGSFISFVGIIMVTKS) threads the bilayer. Topologically, residues 201–219 (DSHQRYQRHIADVSGDDND) are vacuolar. A helical membrane pass occupies residues 220–240 (AVQVLIGNLLALAGAVLYGVY). The Cytoplasmic segment spans residues 241–257 (STLLKREVGDETRVNMK). Residues 258–278 (IFFGFVGLFNLLFLWPSLIVL) traverse the membrane as a helical segment. At 279 to 292 (DFFGWEPFSLPKDP) the chain is on the vacuolar side. A helical transmembrane segment spans residues 293-313 (KVVVIIFVNCLITFVSDFCWA). The Cytoplasmic portion of the chain corresponds to 314 to 321 (KAMLLTSP). The helical transmembrane segment at 322–342 (LTVTVGLSITIPLAMFGDVIF) threads the bilayer. Residues 343 to 345 (KHK) lie on the Vacuolar side of the membrane. A helical membrane pass occupies residues 346 to 366 (TMSALYLFGATLILGSFFIIN). Residues 367-393 (KSSEEEHFENSITASNYESVEVPAANN) are Cytoplasmic-facing.

It belongs to the TPT transporter family.

Its subcellular location is the vacuole membrane. This is an uncharacterized protein from Saccharomyces cerevisiae (strain ATCC 204508 / S288c) (Baker's yeast).